The sequence spans 451 residues: UDP-N-acetylmuramoylalanine--D-glutamate ligase (451 aa).

Residue 116–122 participates in ATP binding; sequence GTNGKTT.

This sequence belongs to the MurCDEF family.

The protein localises to the cytoplasm. It catalyses the reaction UDP-N-acetyl-alpha-D-muramoyl-L-alanine + D-glutamate + ATP = UDP-N-acetyl-alpha-D-muramoyl-L-alanyl-D-glutamate + ADP + phosphate + H(+). The protein operates within cell wall biogenesis; peptidoglycan biosynthesis. Functionally, cell wall formation. Catalyzes the addition of glutamate to the nucleotide precursor UDP-N-acetylmuramoyl-L-alanine (UMA). This is UDP-N-acetylmuramoylalanine--D-glutamate ligase from Clostridioides difficile (strain 630) (Peptoclostridium difficile).